The chain runs to 118 residues: Small ribosomal subunit protein bTHXc (118 aa).

The transit peptide at 1–55 (MASLILGAPPRVTVALPSSRLSSSHSETAGVSLSCFTHQFSLSTSSSSSIPLVYC) directs the protein to the chloroplast. Residues 61 to 118 (KTAKGKRFNHSFGNARPRNKSKGRGPERVPVPPAPPRKDKFENDEKIKIDIDESLFSN) are disordered. Basic and acidic residues predominate over residues 96–111 (PRKDKFENDEKIKIDI). S117 bears the Phosphoserine mark.

Belongs to the bacterial ribosomal protein bTHX family. Part of the 30S ribosomal subunit.

The protein localises to the plastid. Its subcellular location is the chloroplast. In Arabidopsis thaliana (Mouse-ear cress), this protein is Small ribosomal subunit protein bTHXc (RPS31).